We begin with the raw amino-acid sequence, 30 residues long: Dermaseptin-DI4 (30 aa).

As to expression, expressed by the skin glands.

It localises to the secreted. Functionally, antibacterial activity against Gram-positive bacteria S.aureus and E.faecalis, and Gram-negative bacteria P.aeruginosa and E.coli. The protein is Dermaseptin-DI4 of Phyllomedusa distincta (Monkey frog).